The chain runs to 863 residues: Bifunctional uridylyltransferase/uridylyl-removing enzyme (863 aa).

A uridylyltransferase region spans residues 1-328 (MLFSPTLSSP…PSNQDTVIDQ (328 aa)). Residues 329–687 (LDDDFQLINQ…ISNRFSLGGT (359 aa)) form a uridylyl-removing region. An HD domain is found at 446–568 (VDEHTLRVML…VQNQVRLDYL (123 aa)). ACT domains are found at residues 688–772 (EVFI…PNRQ) and 794–863 (QMEL…RNIG).

The protein belongs to the GlnD family. Mg(2+) is required as a cofactor.

The catalysed reaction is [protein-PII]-L-tyrosine + UTP = [protein-PII]-uridylyl-L-tyrosine + diphosphate. The enzyme catalyses [protein-PII]-uridylyl-L-tyrosine + H2O = [protein-PII]-L-tyrosine + UMP + H(+). Uridylyltransferase (UTase) activity is inhibited by glutamine, while glutamine activates uridylyl-removing (UR) activity. In terms of biological role, modifies, by uridylylation and deuridylylation, the PII regulatory proteins (GlnB and homologs), in response to the nitrogen status of the cell that GlnD senses through the glutamine level. Under low glutamine levels, catalyzes the conversion of the PII proteins and UTP to PII-UMP and PPi, while under higher glutamine levels, GlnD hydrolyzes PII-UMP to PII and UMP (deuridylylation). Thus, controls uridylylation state and activity of the PII proteins, and plays an important role in the regulation of nitrogen assimilation and metabolism. This is Bifunctional uridylyltransferase/uridylyl-removing enzyme from Haemophilus influenzae (strain 86-028NP).